A 198-amino-acid polypeptide reads, in one-letter code: Syndecan-4 (198 aa).

The first 18 residues, 1–18, serve as a signal peptide directing secretion; that stretch reads MAPARLFALLLFFVGGVA. Residues 19-145 lie on the Extracellular side of the membrane; the sequence is ESIRETEVID…QGSNIFERTE (127 aa). S39, S61, and S63 each carry an O-linked (Xyl...) (glycosaminoglycan) serine glycan. Residue S95 is glycosylated (O-linked (Xyl...) (chondroitin sulfate) serine). Residues 146-170 form a helical membrane-spanning segment; that stretch reads VLAALIVGGIVGILFAVFLILLLMY. Residues 171 to 198 lie on the Cytoplasmic side of the membrane; that stretch reads RMKKKDEGSYDLGKKPIYKKAPTNEFYA.

This sequence belongs to the syndecan proteoglycan family. Homodimer. Interacts (via its cytoplasmic domain) with GIPC (via its PDZ domain). Interacts (via its cytoplasmic domain) with NUDT16L1. Interacts with CDCP1 and SDCBP. Interacts with DNM2; this interaction is markedly enhanced at focal ahesion site upon induction of focal adhesions and stress-fiber formation. Shedding is enhanced by a number of factors such as heparanase, thrombin or EGF. Also by stress and wound healing. PMA-mediated shedding is inhibited by TIMP3. In terms of processing, O-glycosylated; contains both chondroitin sulfate and heparan sulfate. Ser-39, Ser-61 and Ser-63 can all be modified by either chondroitin sulfate or heparan sulfate, and the protein exists in forms that contain only chondroitin sulfate, only heparan sulfate and both chondroitin sulfate and heparan sulfate. As to expression, detected in fibroblasts (at protein level). Also expressed in epithelial cells.

The protein resides in the membrane. The protein localises to the secreted. Its function is as follows. Cell surface proteoglycan which regulates exosome biogenesis in concert with SDCBP and PDCD6IP. The protein is Syndecan-4 of Homo sapiens (Human).